We begin with the raw amino-acid sequence, 142 residues long: Virulence-associated membrane protein 1 (142 aa).

Residues 1-20 (MRGILVALTAALIFCSLTPA) form the signal peptide. A helical membrane pass occupies residues 59-79 (IAIAVGTALVTLVSAGVGGML).

In terms of assembly, monomer.

It localises to the membrane. During infection, may play a role in establishing and maintaining biotrophy; the formation of a tight interaction zone between the host and the pathogen. The sequence is that of Virulence-associated membrane protein 1 from Mycosarcoma maydis (Corn smut fungus).